The chain runs to 253 residues: Testis-expressed protein 101 (253 aa).

A signal peptide spans 1–24; that stretch reads MAACWVHYLLLLLLGVSHQTLAQS. 5 N-linked (GlcNAc...) asparagine glycosylation sites follow: Asn-44, Asn-112, Asn-117, Asn-121, and Asn-162. One can recognise a UPAR/Ly6 1 domain in the interval 53–117; the sequence is ETCNPGELCQ…SNYCNSSLCN (65 aa). The UPAR/Ly6 2 domain maps to 143 to 218; it reads CPTCVALGSC…KETCSYHSLL (76 aa). The GPI-anchor amidated serine moiety is linked to residue Ser-226. Positions 227–253 are cleaved as a propeptide — removed in mature form; that stretch reads RASGRSTSLWVLELLLPAVLVALTHFP.

As to quaternary structure, interacts with VAMP3. Interacts with LY6K. Interacts with DPEP3; co-localized on the cell surface of spermatocytes, spermatids, and testicular spermatozoa, co-localized only in cytoplasmic droplets of caput and corpus epididymal sperm. Interacts with ADAM5. Post-translationally, N-glycosylated; by high mannose and/or biantennary complex and/or certain types of hybrid oligosaccharides; possesses different oligosaccharides chains according to its subcellular localization in the testis. Sheds from membrane raft by ACE and released from the cell surface of epididymal sperm while it passes through the caput epididymis leading to disappearance of TEX101 on spermatozoa; is essential to produce fertile spermatozoa.

The protein localises to the cell membrane. It is found in the membrane raft. Its subcellular location is the cytoplasmic vesicle. The protein resides in the secretory vesicle. It localises to the acrosome. The protein localises to the secreted. Functionally, plays a role in fertilization by controlling binding of sperm to zona pellucida and migration of spermatozoa into the oviduct. May play a role in signal transduction and promote protein tyrosine phosphorylation. This Cricetulus griseus (Chinese hamster) protein is Testis-expressed protein 101.